Here is a 240-residue protein sequence, read N- to C-terminus: uncharacterized protein (240 aa).

Disordered regions lie at residues 125–148 and 177–240; these read RRLD…EDVD and DESN…RKSR. Acidic residues predominate over residues 130–148; the sequence is SSEDGEEEEENDYIDEDVD. Positions 192–203 are enriched in basic and acidic residues; that stretch reads SPRKSHIDHDFV. A compositionally biased stretch (acidic residues) spans 204–217; that stretch reads IPEDEMLSEEEEQE. Phosphoserine is present on serine 231.

This sequence belongs to the UTP5 family.

Its subcellular location is the cytoplasm. The protein resides in the nucleus. This is an uncharacterized protein from Schizosaccharomyces pombe (strain 972 / ATCC 24843) (Fission yeast).